Consider the following 587-residue polypeptide: DELLA protein RGA (587 aa).

Positions 1–26 (MKRDHHQFQGRLSNHGTSSSSSSISK) are disordered. The short motif at 44–48 (DELLA) is the DELLA motif element. An LEXLE motif motif is present at residues 66-70 (LEQLE). The VHYNP motif signature appears at 89–93 (VHYNP). A disordered region spans residues 152–181 (IDSSSSSNNQNKRLKSCSSPDSMVTSTSTG). Residues 153–175 (DSSSSSNNQNKRLKSCSSPDSMV) are compositionally biased toward polar residues. Positions 212–581 (VDSQENGVRL…RPLITTSAWK (370 aa)) constitute a GRAS domain. The tract at residues 219–273 (VRLVHALMACAEAIQQNNLTLAEALVKQIGCLAVSQAGAMRKVATYFAEALARRI) is leucine repeat I (LRI). Residues 292–357 (QMHFYETCPY…GGPPTFRLTG (66 aa)) form a VHIID region. Residues 323–327 (VHVID) carry the VHIID motif. Positions 371 to 403 (EVGCKLAQLAEAIHVEFEYRGFVANSLADLDAS) are leucine repeat II (LRII). Residues 415-502 (VAVNSVFELH…EVYLGKQICN (88 aa)) form a PFYRE region. The LXXLL motif motif lies at 423–427 (LHKLL). The tract at residues 505-581 (ACEGPDRVER…RPLITTSAWK (77 aa)) is SAW.

This sequence belongs to the GRAS family. DELLA subfamily. In terms of assembly, interacts directly with the GID2/SLY1 component of the SCF(GID2) complex. Interacts (via N-terminus) with GID1A, GID1B and GID1B (via N-terminus). Binds to bHLH transcription factors such as MYC2, PIF1, PIF4, PIF6 and SPT. Interacts with the BOI proteins BOI, BRG1, BRG2 and BRG3. Interacts with NFYC9. Interacts with TOPP4. Interacts with FLZ5. Binds to zinc finger proteins MGP/IDD3, IDD4, IDD5, BIB/IDD9 and JKD/IDD10 in the nucleus. Binds to and coactivates GAF1/IDD2 and ENY/IDD1. Binds to PDF2 and ATML1. Phosphorylated. Phosphorylation may increase the interaction with GID2. In terms of processing, gibberellin (GA) induces dephosphorylation of RGA by TOPP4 and subsequent degradation by the proteasomal pathway. Post-translationally, ubiquitinated. Upon GA application it is ubiquitinated by the SCF(GID2) complex, leading to its subsequent degradation. O-fucosylated by SPY. O-fucosylation enhances RGA activity by promoting RGA binding to key transcription factors in brassinosteroid and light signaling pathways. Ubiquitously expressed. Expressed in roots, rosette leaves, bolting and mature stems, young and mature siliques, flower buds and influorescences.

It is found in the nucleus. Functionally, probable transcriptional regulator that acts as a repressor of the gibberellin (GA) signaling pathway. Probably acts by participating in large multiprotein complexes that repress transcription of GA-inducible genes. Positively regulates XERICO expression in seeds. Upon GA application, it is degraded by the proteasome, allowing the GA signaling pathway. Compared to other DELLA proteins, it is the most sensitive to GA application. No effect of the BOI proteins on its stability. Its activity is probably regulated by other phytohormones such as auxin and ethylene, attenuation of auxin transport delaying its GA-induced degradation. Involved in the regulation of seed dormancy and germination, including glucose-induced delay of seed germination. This chain is DELLA protein RGA, found in Arabidopsis thaliana (Mouse-ear cress).